The chain runs to 363 residues: MSRPQFDPSAYAAQLEDKKSRLAGLLAPFAAPAPEVFESPREHYRLRAEFRLWRETGNEKRHYAMFEQGDKHTPILLEDFPIASRRINELMPRLKAAWADPALGFKLFQVEFLTTLAGDALITLCYHRPIDDAWRQAAEKLAAELGVNLVGRSRGKRIVVGRDYVEEELSVAGRRFRYRQPEGAFTQPNGEVNQKMLGWAYEALGQRDDDLLELYCGNGNFTLPLATRVRKVLATEISKSSVNAALANLADNAVDNVSLVRLSAEELTQALNEVRPFRRLADIDLKSYAFGSVFVDPPRAGMDPDTCELARRFERILYISCNPETLAQNIAQLHDTHRISRCALFDQFPYTHHMESGVLLERR.

Residues Q187, Y215, N220, E236, and D296 each contribute to the S-adenosyl-L-methionine site. C321 serves as the catalytic Nucleophile. E355 (proton acceptor) is an active-site residue.

The protein belongs to the class I-like SAM-binding methyltransferase superfamily. RNA M5U methyltransferase family. TrmA subfamily.

It carries out the reaction uridine(54) in tRNA + S-adenosyl-L-methionine = 5-methyluridine(54) in tRNA + S-adenosyl-L-homocysteine + H(+). The enzyme catalyses uridine(341) in tmRNA + S-adenosyl-L-methionine = 5-methyluridine(341) in tmRNA + S-adenosyl-L-homocysteine + H(+). Dual-specificity methyltransferase that catalyzes the formation of 5-methyluridine at position 54 (m5U54) in all tRNAs, and that of position 341 (m5U341) in tmRNA (transfer-mRNA). This chain is tRNA/tmRNA (uracil-C(5))-methyltransferase, found in Pseudomonas aeruginosa (strain ATCC 15692 / DSM 22644 / CIP 104116 / JCM 14847 / LMG 12228 / 1C / PRS 101 / PAO1).